A 237-amino-acid chain; its full sequence is BTB/POZ domain-containing protein KCTD6 (237 aa).

Residues 1 to 104 are interaction with ANK1 isoform Mu7; it reads MDNGDWGYMM…FYQIEPLIQC (104 aa). Positions 10-110 are interaction with CUL3; sequence MSDPVTLNVG…LIQCLNDPRP (101 aa). In terms of domain architecture, BTB spans 12-81; that stretch reads DPVTLNVGGH…LRTSELTLPL (70 aa). Residues 113-187 form an interaction with USP21 region; it reads PMDTFEEVVE…TFGPCDYHQE (75 aa).

Homopentamer. Interacts with KCTD11; KCTD6 and KCTD11 may associate in heteropentameric assemblies. Interacts (via BTB domain) with CUL3; initially a 4:4 stoichiometry has been reported, however, electron microscopy revealed pentameric states with a five-pointed pinwheel shape. The interaction with CUL3 is indicative for a participation in a BCR (BTB-CUL3-RBX1) E3 ubiquitin-protein ligase complex. Interacts with HDAC1; probably indirect as the interaction requires the presence of KCTD11. Interacts with USP21 (preferentially catalytic inactive form). Interacts with ANK1 isoform Mu7; detected in striated muscle. Interacts with USP11. As to expression, highly expressed in cerebellum and brain.

The protein localises to the cytoplasm. The protein resides in the myofibril. Its subcellular location is the sarcomere. It is found in the m line. The protein operates within protein modification; protein ubiquitination. Probable substrate-specific adapter of a BCR (BTB-CUL3-RBX1) E3 ubiquitin-protein ligase complex mediating the ubiquitination and subsequent proteasomal degradation of target proteins. Promotes the ubiquitination of HDAC1; the function seems to depend on KCTD11:KCTD6 oligomerization. Can function as antagonist of the Hedgehog pathway by affecting the nuclear transfer of transcription factor GLI1; the function probably occurs via HDAC1 down-regulation, keeping GLI1 acetylated and inactive. Inhibits cell growth and tumorigenicity of medulloblastoma (MDB). Involved in regulating protein levels of ANK1 isoform Mu7 probably implicating CUL3-dependent proteasomal degradation. The sequence is that of BTB/POZ domain-containing protein KCTD6 (Kctd6) from Mus musculus (Mouse).